A 475-amino-acid chain; its full sequence is Ribulose bisphosphate carboxylase large chain (475 aa).

The propeptide occupies 1–2 (MS). Residue Pro-3 is modified to N-acetylproline. Position 14 is an N6,N6,N6-trimethyllysine (Lys-14). Substrate-binding residues include Asn-123 and Thr-173. The active-site Proton acceptor is Lys-175. Lys-177 serves as a coordination point for substrate. Mg(2+) is bound by residues Lys-201, Asp-203, and Glu-204. The residue at position 201 (Lys-201) is an N6-carboxylysine. His-294 (proton acceptor) is an active-site residue. Residues Arg-295, His-327, and Ser-379 each contribute to the substrate site.

The protein belongs to the RuBisCO large chain family. Type I subfamily. Heterohexadecamer of 8 large chains and 8 small chains. The cofactor is Mg(2+).

The protein localises to the plastid. It is found in the chloroplast. It catalyses the reaction 2 (2R)-3-phosphoglycerate + 2 H(+) = D-ribulose 1,5-bisphosphate + CO2 + H2O. It carries out the reaction D-ribulose 1,5-bisphosphate + O2 = 2-phosphoglycolate + (2R)-3-phosphoglycerate + 2 H(+). RuBisCO catalyzes two reactions: the carboxylation of D-ribulose 1,5-bisphosphate, the primary event in carbon dioxide fixation, as well as the oxidative fragmentation of the pentose substrate in the photorespiration process. Both reactions occur simultaneously and in competition at the same active site. The sequence is that of Ribulose bisphosphate carboxylase large chain from Nymphaea alba (White water-lily).